The sequence spans 217 residues: Chorionic somatomammotropin hormone 1 (217 aa).

A signal peptide spans 1 to 26; that stretch reads MAPGSRTSLLLAFALLCLPWLQEAGA. Position 44 (His-44) interacts with Zn(2+). An intrachain disulfide couples Cys-79 to Cys-191. Glu-200 contacts Zn(2+). Cys-208 and Cys-215 are oxidised to a cystine.

The protein belongs to the somatotropin/prolactin family. Can be found in a monomeric as well as dimeric form.

The protein resides in the secreted. In terms of biological role, produced only during pregnancy and is involved in stimulating lactation, fetal growth and metabolism. Does not interact with GHR but only activates PRLR through zinc-induced dimerization. This is Chorionic somatomammotropin hormone 1 (CSH1) from Homo sapiens (Human).